The primary structure comprises 145 residues: Neutral phospholipase A2 homolog taipoxin beta chain 1 (145 aa).

A signal peptide spans 1 to 27; it reads MHPAHLLVLLAVCVSLLGASDIPPLPL. Intrachain disulfides connect Cys38–Cys98, Cys54–Cys144, Cys56–Cys72, Cys71–Cys125, Cys78–Cys118, Cys87–Cys111, and Cys105–Cys116.

Belongs to the phospholipase A2 family. Group I subfamily. D49 sub-subfamily. In terms of assembly, heterotrimer of alpha, beta, and gamma chains; non-covalently linked. In terms of tissue distribution, expressed by the venom gland.

It is found in the secreted. Heterotrimer: Snake venom phospholipase A2 (PLA2) heterotrimer that acts as a potent presynaptic neurotoxin by blocking synaptic transmission and synaptic vesicle recycling. May act by binding in a calcium-dependent fashion to neurotonal pentraxin-1 (NPTX1) and neurotonal pentraxin-2 (NPTX2), but not to neuronal pentraxin receptor (NPTXR). Also binds to taipoxin-associated calcium binding protein 49 (RCN2), a protein localized in the lumen of endoplasmic reticulum. In terms of biological role, monomer (beta chain): Snake venom phospholipase A2 homolog that is neither toxic nor enzymatically active. Does not bind calcium. The protein is Neutral phospholipase A2 homolog taipoxin beta chain 1 of Oxyuranus scutellatus scutellatus (Australian taipan).